We begin with the raw amino-acid sequence, 295 residues long: Small ribosomal subunit biogenesis GTPase RsgA (295 aa).

Residues 65 to 223 (KNQLVRPPVA…VLDTPGFTAL (159 aa)) form the CP-type G domain. GTP contacts are provided by residues 114–117 (NKVD) and 165–173 (GPSGVGKSS). Residues Cys246, Cys251, His253, and Cys259 each coordinate Zn(2+).

It belongs to the TRAFAC class YlqF/YawG GTPase family. RsgA subfamily. As to quaternary structure, monomer. Associates with 30S ribosomal subunit, binds 16S rRNA. Requires Zn(2+) as cofactor.

Its subcellular location is the cytoplasm. Functionally, one of several proteins that assist in the late maturation steps of the functional core of the 30S ribosomal subunit. Helps release RbfA from mature subunits. May play a role in the assembly of ribosomal proteins into the subunit. Circularly permuted GTPase that catalyzes slow GTP hydrolysis, GTPase activity is stimulated by the 30S ribosomal subunit. The polypeptide is Small ribosomal subunit biogenesis GTPase RsgA (Caldanaerobacter subterraneus subsp. tengcongensis (strain DSM 15242 / JCM 11007 / NBRC 100824 / MB4) (Thermoanaerobacter tengcongensis)).